Here is a 299-residue protein sequence, read N- to C-terminus: Virginiamycin B lyase (299 aa).

Residue H229 coordinates substrate. E269 lines the Mg(2+) pocket. H271 (proton acceptor) is an active-site residue. E286 is a binding site for Mg(2+).

Belongs to the Vgb family. Monomer. Mg(2+) serves as cofactor.

In terms of biological role, inactivates the type B streptogramin antibiotics by linearizing the lactone ring at the ester linkage, generating a free phenylglycine carboxylate and converting the threonyl moiety into 2-amino-butenoic acid. The sequence is that of Virginiamycin B lyase from Bordetella bronchiseptica (strain ATCC BAA-588 / NCTC 13252 / RB50) (Alcaligenes bronchisepticus).